A 159-amino-acid polypeptide reads, in one-letter code: MKHLPKHLRPRWRYFAVGIETWPDADLGRRGFQRALWYAAGNLLGDAGSADADLTLLSFSHDGGEGEAIVRARHGHVDDARATIACVSEVDDEPVGVRVRGISGTVRACEERYMGRAGGSSTQRDVAFEGAERSAVVREDAYDVWTGSAYVGAAAFDTE.

Belongs to the eukaryotic/archaeal RNase P protein component 2 family. As to quaternary structure, consists of a catalytic RNA component and at least 4-5 protein subunits.

It is found in the cytoplasm. The catalysed reaction is Endonucleolytic cleavage of RNA, removing 5'-extranucleotides from tRNA precursor.. Part of ribonuclease P, a protein complex that generates mature tRNA molecules by cleaving their 5'-ends. This Halorubrum lacusprofundi (strain ATCC 49239 / DSM 5036 / JCM 8891 / ACAM 34) protein is Ribonuclease P protein component 2.